A 134-amino-acid polypeptide reads, in one-letter code: Large ribosomal subunit protein eL32 (134 aa).

It belongs to the eukaryotic ribosomal protein eL32 family.

In Spodoptera frugiperda (Fall armyworm), this protein is Large ribosomal subunit protein eL32 (RpL32).